Reading from the N-terminus, the 438-residue chain is L-fucose-proton symporter (438 aa).

At 2 to 26 (GNTSIQTQSYRAVDKDAGQSRSYII) the chain is on the cytoplasmic side. Residues 27-53 (PFALLCSLFFLWAVANNLNDILLPQFQ) form a helical membrane-spanning segment. Residues 54 to 61 (QAFTLTNF) lie on the Periplasmic side of the membrane. Residues 62–87 (QAGLIQSAFYFGYFIIPIPAGILMKK) traverse the membrane as a helical segment. Residues 88–90 (LSY) are Cytoplasmic-facing. Residues 91–113 (KAGIITGLFLYALGAALFWPAAE) form a helical membrane-spanning segment. Residues 114 to 117 (IMNY) are Periplasmic-facing. The chain crosses the membrane as a helical span at residues 118–144 (TLFLVGLFIIAAGLGCLETAANPFVTV). Residues 145-150 (LGPESS) are Cytoplasmic-facing. A helical membrane pass occupies residues 151 to 178 (GHFRLNLAQTFNSFGAIIAVVFGQSLIL). The Periplasmic segment spans residues 179–193 (SNVPHQSQDVLDKMS). The helical transmembrane segment at 194–227 (PEQLSAYKHSLVLSVQTPYMIIVAIVLLVALLIM) threads the bilayer. At 228–257 (LTKFPALQSDNHSDAKQGSFSASLSRLARI) the chain is on the cytoplasmic side. The chain crosses the membrane as a helical span at residues 258–287 (RHWRWAVLAQFCYVGAQTACWSYLIRYAVE). At 288-293 (EIPGMT) the chain is on the periplasmic side. A helical membrane pass occupies residues 294-319 (AGFAANYLTGTMVCFFIGRFTGTWLI). Residues 320-324 (SRFAP) lie on the Cytoplasmic side of the membrane. A helical transmembrane segment spans residues 325–343 (HKVLAAYALIAMALCLISA). The Periplasmic portion of the chain corresponds to 344-347 (FAGG). A helical membrane pass occupies residues 348 to 372 (HVGLIALTLCSAFMSIQYPTIFSLG). Residues 373–379 (IKNLGQD) are Cytoplasmic-facing. Residues 380–407 (TKYGSSFIVMTIIGGGIVTPVMGFVSDA) form a helical membrane-spanning segment. Over 408–410 (AGN) the chain is Periplasmic. The helical transmembrane segment at 411–430 (IPTAELIPALCFAVIFIFAR) threads the bilayer. At 431 to 438 (FRSQTATN) the chain is on the cytoplasmic side.

The protein belongs to the major facilitator superfamily. FHS transporter (TC 2.A.1.7) family.

It localises to the cell inner membrane. It catalyses the reaction L-fucose(in) + H(+)(in) = L-fucose(out) + H(+)(out). The catalysed reaction is D-arabinose(out) + H(+)(out) = D-arabinose(in) + H(+)(in). It carries out the reaction L-galactose(out) + H(+)(out) = L-galactose(in) + H(+)(in). Functionally, mediates the uptake of L-fucose across the boundary membrane with the concomitant transport of protons into the cell (symport system). Can also transport L-galactose and D-arabinose, but at reduced rates compared with L-fucose. Is not able to transport L-rhamnose and L-arabinose. Binds D-arabinose with the highest affinity, followed by L-fucose, and then by L-galactose. The chain is L-fucose-proton symporter (fucP) from Escherichia coli (strain K12).